Reading from the N-terminus, the 269-residue chain is RBPJ-interacting and tubulin-associated protein 1 (269 aa).

Positions 5-17 (VELAVSGIQTLPL) match the Nuclear export signal motif. Disordered regions lie at residues 37–101 (SLFG…NKYR) and 141–269 (FWTP…PPWK). Residues 62–77 (RTSGVGTGTSRASGAN) are compositionally biased toward polar residues. Residues 79–93 (SCETTSSSGSTPTLT) are compositionally biased toward low complexity. Residues 92-108 (LTPRKKNKYRLISHTPS) carry the Nuclear localization signal motif. The interaction with RBPJ/RBPSUH stretch occupies residues 128 to 156 (WMAKGDAAKLHSLFWTPPATPRGSHSPRP). Residues 156 to 269 (PRETPLRAIH…ATQKPKPPWK (114 aa)) form an interaction with tubulin region.

The protein belongs to the RITA family. In terms of assembly, interacts with RBPJ/RBPSUH.

It is found in the cytoplasm. The protein localises to the nucleus. The protein resides in the cytoskeleton. Its subcellular location is the microtubule organizing center. It localises to the centrosome. Its function is as follows. Tubulin-binding protein that acts as a negative regulator of Notch signaling pathway. Shuttles between the cytoplasm and the nucleus and mediates the nuclear export of RBPJ/RBPSUH, thereby preventing the interaction between RBPJ/RBPSUH and NICD product of Notch proteins (Notch intracellular domain), leading to down-regulate Notch-mediated transcription. May play a role in neurogenesis. The polypeptide is RBPJ-interacting and tubulin-associated protein 1 (RITA1) (Ailuropoda melanoleuca (Giant panda)).